Reading from the N-terminus, the 283-residue chain is Probable endonuclease 4 (283 aa).

Zn(2+) is bound by residues histidine 69, histidine 113, glutamate 148, aspartate 182, histidine 185, histidine 217, aspartate 230, histidine 232, and glutamate 262.

Belongs to the AP endonuclease 2 family. Zn(2+) is required as a cofactor.

The enzyme catalyses Endonucleolytic cleavage to 5'-phosphooligonucleotide end-products.. Functionally, endonuclease IV plays a role in DNA repair. It cleaves phosphodiester bonds at apurinic or apyrimidinic (AP) sites, generating a 3'-hydroxyl group and a 5'-terminal sugar phosphate. The protein is Probable endonuclease 4 of Bifidobacterium longum (strain NCC 2705).